Consider the following 638-residue polypeptide: Glucans biosynthesis glucosyltransferase H (638 aa).

The next 6 helical transmembrane spans lie at 60–82 (FYLI…AVMW), 97–119 (FMFL…FCVV), 415–437 (IGHY…IPLV), 464–486 (LWIF…FALL), 499–521 (LRVL…VVMY), and 578–600 (LAMW…ALTS).

Belongs to the glycosyltransferase 2 family. OpgH subfamily.

The protein resides in the cell inner membrane. It functions in the pathway glycan metabolism; osmoregulated periplasmic glucan (OPG) biosynthesis. Involved in the biosynthesis of osmoregulated periplasmic glucans (OPGs). This is Glucans biosynthesis glucosyltransferase H from Xylella fastidiosa (strain 9a5c).